We begin with the raw amino-acid sequence, 292 residues long: RWD domain-containing protein 2A (292 aa).

The RWD domain maps to 14-134 (LEMEMLFSMF…QWLQDNSASY (121 aa)).

This chain is RWD domain-containing protein 2A (RWDD2A), found in Homo sapiens (Human).